Consider the following 222-residue polypeptide: 7-cyano-7-deazaguanine synthase (222 aa).

8 to 18 (LSGGLDSATCL) contributes to the ATP binding site. 4 residues coordinate Zn(2+): C187, C197, C200, and C203.

It belongs to the QueC family. Requires Zn(2+) as cofactor.

It catalyses the reaction 7-carboxy-7-deazaguanine + NH4(+) + ATP = 7-cyano-7-deazaguanine + ADP + phosphate + H2O + H(+). It functions in the pathway purine metabolism; 7-cyano-7-deazaguanine biosynthesis. Functionally, catalyzes the ATP-dependent conversion of 7-carboxy-7-deazaguanine (CDG) to 7-cyano-7-deazaguanine (preQ(0)). The chain is 7-cyano-7-deazaguanine synthase from Alcanivorax borkumensis (strain ATCC 700651 / DSM 11573 / NCIMB 13689 / SK2).